Consider the following 165-residue polypeptide: MMSGPRLTHIDSAGEAHMVDVGDKAETERVAAAEGFVRMRPETLALILEGNAKKGDVIGTARLAGIMAAKQTSNLIPLCHPLMLTKVSVDIVPDDALPGLRIEAMAKLKGRTGVEMEALTAVSIACLTIYDMAKAADREMEIGGIRLVSKSGGKSGDYRRGGDQD.

Substrate contacts are provided by residues 78–80 (LCH) and 116–117 (ME). The active site involves Asp-131.

This sequence belongs to the MoaC family. In terms of assembly, homohexamer; trimer of dimers.

It catalyses the reaction (8S)-3',8-cyclo-7,8-dihydroguanosine 5'-triphosphate = cyclic pyranopterin phosphate + diphosphate. Its pathway is cofactor biosynthesis; molybdopterin biosynthesis. Its function is as follows. Catalyzes the conversion of (8S)-3',8-cyclo-7,8-dihydroguanosine 5'-triphosphate to cyclic pyranopterin monophosphate (cPMP). The chain is Cyclic pyranopterin monophosphate synthase from Sinorhizobium fredii (strain NBRC 101917 / NGR234).